Reading from the N-terminus, the 143-residue chain is uncharacterized protein (143 aa).

Positions 111–143 (VTQDISHTSGKSPTPKAKSSSPKKSKKKNWIPL) are disordered. A compositionally biased stretch (low complexity) spans 119–130 (SGKSPTPKAKSS). Residues 131–143 (SPKKSKKKNWIPL) are compositionally biased toward basic residues.

This sequence belongs to the chlamydial CPn_0742/CT_635/TC_0003 family.

This is an uncharacterized protein from Chlamydia muridarum (strain MoPn / Nigg).